Here is a 198-residue protein sequence, read N- to C-terminus: Glycerol-3-phosphate acyltransferase (198 aa).

The next 3 helical transmembrane spans lie at 5-25 (AVIL…GYLI), 114-134 (VLIM…IAVL), and 154-176 (AFAL…LVAV).

It belongs to the PlsY family. As to quaternary structure, probably interacts with PlsX.

It is found in the cell membrane. It catalyses the reaction an acyl phosphate + sn-glycerol 3-phosphate = a 1-acyl-sn-glycero-3-phosphate + phosphate. It participates in lipid metabolism; phospholipid metabolism. Catalyzes the transfer of an acyl group from acyl-phosphate (acyl-PO(4)) to glycerol-3-phosphate (G3P) to form lysophosphatidic acid (LPA). This enzyme utilizes acyl-phosphate as fatty acyl donor, but not acyl-CoA or acyl-ACP. The polypeptide is Glycerol-3-phosphate acyltransferase (Desulforudis audaxviator (strain MP104C)).